The following is a 61-amino-acid chain: Small ribosomal subunit protein uS14 (61 aa).

The Zn(2+) site is built by Cys-24, Cys-27, Cys-40, and Cys-43.

The protein belongs to the universal ribosomal protein uS14 family. Zinc-binding uS14 subfamily. As to quaternary structure, part of the 30S ribosomal subunit. Contacts proteins S3 and S10. The cofactor is Zn(2+).

Functionally, binds 16S rRNA, required for the assembly of 30S particles and may also be responsible for determining the conformation of the 16S rRNA at the A site. The protein is Small ribosomal subunit protein uS14 of Kosmotoga olearia (strain ATCC BAA-1733 / DSM 21960 / TBF 19.5.1).